Reading from the N-terminus, the 117-residue chain is NADH-ubiquinone oxidoreductase chain 3 (117 aa).

The next 3 membrane-spanning stretches (helical) occupy residues isoleucine 6–isoleucine 26, phenylalanine 58–tryptophan 78, and leucine 85–isoleucine 105.

The protein belongs to the complex I subunit 3 family.

It localises to the mitochondrion membrane. It catalyses the reaction a ubiquinone + NADH + 5 H(+)(in) = a ubiquinol + NAD(+) + 4 H(+)(out). Functionally, core subunit of the mitochondrial membrane respiratory chain NADH dehydrogenase (Complex I) that is believed to belong to the minimal assembly required for catalysis. Complex I functions in the transfer of electrons from NADH to the respiratory chain. The immediate electron acceptor for the enzyme is believed to be ubiquinone. The sequence is that of NADH-ubiquinone oxidoreductase chain 3 (ND3) from Sarcophyton glaucum (Toadstool umbrella leather coral).